Reading from the N-terminus, the 418-residue chain is Tyrosine--tRNA ligase 1 (418 aa).

An L-tyrosine-binding site is contributed by Tyr34. Residues Pro39–His48 carry the 'HIGH' region motif. L-tyrosine-binding residues include Tyr169 and Gln173. Positions Lys230–Thr234 match the 'KMSKS' region motif. Lys233 contributes to the ATP binding site. Residues Thr352 to Tyr418 enclose the S4 RNA-binding domain.

This sequence belongs to the class-I aminoacyl-tRNA synthetase family. TyrS type 1 subfamily. Homodimer.

It localises to the cytoplasm. The catalysed reaction is tRNA(Tyr) + L-tyrosine + ATP = L-tyrosyl-tRNA(Tyr) + AMP + diphosphate + H(+). Catalyzes the attachment of tyrosine to tRNA(Tyr) in a two-step reaction: tyrosine is first activated by ATP to form Tyr-AMP and then transferred to the acceptor end of tRNA(Tyr). The sequence is that of Tyrosine--tRNA ligase 1 from Bacillus anthracis.